We begin with the raw amino-acid sequence, 197 residues long: Imidazoleglycerol-phosphate dehydratase (197 aa).

The protein belongs to the imidazoleglycerol-phosphate dehydratase family.

It localises to the cytoplasm. It carries out the reaction D-erythro-1-(imidazol-4-yl)glycerol 3-phosphate = 3-(imidazol-4-yl)-2-oxopropyl phosphate + H2O. The protein operates within amino-acid biosynthesis; L-histidine biosynthesis; L-histidine from 5-phospho-alpha-D-ribose 1-diphosphate: step 6/9. In Pseudomonas fluorescens (strain ATCC BAA-477 / NRRL B-23932 / Pf-5), this protein is Imidazoleglycerol-phosphate dehydratase.